Reading from the N-terminus, the 630-residue chain is 1-deoxy-D-xylulose-5-phosphate synthase (630 aa).

Thiamine diphosphate contacts are provided by residues His-72 and Gly-113–Ser-115. Asp-144 contributes to the Mg(2+) binding site. Residues Gly-145–Ala-146, Asn-173, Tyr-284, and Glu-367 contribute to the thiamine diphosphate site. Position 173 (Asn-173) interacts with Mg(2+).

The protein belongs to the transketolase family. DXPS subfamily. In terms of assembly, homodimer. It depends on Mg(2+) as a cofactor. Thiamine diphosphate serves as cofactor.

The catalysed reaction is D-glyceraldehyde 3-phosphate + pyruvate + H(+) = 1-deoxy-D-xylulose 5-phosphate + CO2. The protein operates within metabolic intermediate biosynthesis; 1-deoxy-D-xylulose 5-phosphate biosynthesis; 1-deoxy-D-xylulose 5-phosphate from D-glyceraldehyde 3-phosphate and pyruvate: step 1/1. In terms of biological role, catalyzes the acyloin condensation reaction between C atoms 2 and 3 of pyruvate and glyceraldehyde 3-phosphate to yield 1-deoxy-D-xylulose-5-phosphate (DXP). The sequence is that of 1-deoxy-D-xylulose-5-phosphate synthase from Bacillus mycoides (strain KBAB4) (Bacillus weihenstephanensis).